The sequence spans 196 residues: MSESQSEIEHNNNNSKLTKISQPPTVRIIPPLNFCPVEKQLYRSGQPSIINQSFLQDLNLKTILWLASEEPQEDFLDYCSMNNIAVEFVGLMNEYSYQNVNPWDALSEDTIKKALELICNKENYPLLVCCGMGRHRTGTVIGCLRRLQGWNLASVSEEYRRFTGSRGGRIMVELLIESFDINSVQIDPTKMPGWLT.

Residues 33-192 (NFCPVEKQLY…SVQIDPTKMP (160 aa)) form the Tyrosine-protein phosphatase domain. Catalysis depends on cysteine 130, which acts as the Phosphocysteine intermediate.

Belongs to the protein-tyrosine phosphatase family.

Its subcellular location is the cytoplasm. It catalyses the reaction O-phospho-L-tyrosyl-[protein] + H2O = L-tyrosyl-[protein] + phosphate. Functionally, putative tyrosine-protein phosphatase required for protection against superoxide stress. The chain is Putative tyrosine-protein phosphatase OCA1 (OCA1) from Debaryomyces hansenii (strain ATCC 36239 / CBS 767 / BCRC 21394 / JCM 1990 / NBRC 0083 / IGC 2968) (Yeast).